The primary structure comprises 471 residues: Glutamate--tRNA ligase (471 aa).

Residues 9–19 (PSPTGYLHVGG) carry the 'HIGH' region motif. Residues C98, C100, C125, and H127 each contribute to the Zn(2+) site. Positions 237–241 (KLSKR) match the 'KMSKS' region motif. K240 serves as a coordination point for ATP.

This sequence belongs to the class-I aminoacyl-tRNA synthetase family. Glutamate--tRNA ligase type 1 subfamily. Monomer. It depends on Zn(2+) as a cofactor.

The protein resides in the cytoplasm. It carries out the reaction tRNA(Glu) + L-glutamate + ATP = L-glutamyl-tRNA(Glu) + AMP + diphosphate. Catalyzes the attachment of glutamate to tRNA(Glu) in a two-step reaction: glutamate is first activated by ATP to form Glu-AMP and then transferred to the acceptor end of tRNA(Glu). The polypeptide is Glutamate--tRNA ligase (Escherichia coli O9:H4 (strain HS)).